Here is a 301-residue protein sequence, read N- to C-terminus: Ribosomal RNA small subunit methyltransferase A (301 aa).

S-adenosyl-L-methionine contacts are provided by asparagine 18, leucine 20, glycine 45, glutamate 66, aspartate 91, and asparagine 112. The disordered stretch occupies residues 267-301 (PPEAAPVKEKRRMAKNKMTEPANNNLNENSAPEVD). Positions 287–301 (PANNNLNENSAPEVD) are enriched in polar residues.

It belongs to the class I-like SAM-binding methyltransferase superfamily. rRNA adenine N(6)-methyltransferase family. RsmA subfamily.

Its subcellular location is the cytoplasm. It catalyses the reaction adenosine(1518)/adenosine(1519) in 16S rRNA + 4 S-adenosyl-L-methionine = N(6)-dimethyladenosine(1518)/N(6)-dimethyladenosine(1519) in 16S rRNA + 4 S-adenosyl-L-homocysteine + 4 H(+). In terms of biological role, specifically dimethylates two adjacent adenosines (A1518 and A1519) in the loop of a conserved hairpin near the 3'-end of 16S rRNA in the 30S particle. May play a critical role in biogenesis of 30S subunits. The protein is Ribosomal RNA small subunit methyltransferase A of Colwellia psychrerythraea (strain 34H / ATCC BAA-681) (Vibrio psychroerythus).